The sequence spans 265 residues: Mlc titration factor A (265 aa).

Zn(2+) contacts are provided by H111, H148, H152, and E211.

It belongs to the MtfA family. In terms of assembly, interacts with Mlc. It depends on Zn(2+) as a cofactor.

Its subcellular location is the cytoplasm. In terms of biological role, involved in the modulation of the activity of the glucose-phosphotransferase system (glucose-PTS). Interacts with the transcriptional repressor Mlc, preventing its interaction with DNA and leading to the modulation of expression of genes regulated by Mlc, including ptsG, which encodes the PTS system glucose-specific EIICB component. Shows zinc-dependent metallopeptidase activity. This chain is Mlc titration factor A, found in Escherichia coli (strain SMS-3-5 / SECEC).